A 124-amino-acid chain; its full sequence is ATP synthase epsilon chain (124 aa).

Over residues 99–118 the composition is skewed to basic and acidic residues; sequence LEQAKTEGDAHAERRADVRL. Residues 99-124 are disordered; it reads LEQAKTEGDAHAERRADVRLRAAAGR.

It belongs to the ATPase epsilon chain family. F-type ATPases have 2 components, CF(1) - the catalytic core - and CF(0) - the membrane proton channel. CF(1) has five subunits: alpha(3), beta(3), gamma(1), delta(1), epsilon(1). CF(0) has three main subunits: a, b and c.

Its subcellular location is the cell membrane. In terms of biological role, produces ATP from ADP in the presence of a proton gradient across the membrane. This is ATP synthase epsilon chain (atpC) from Streptomyces coelicolor (strain ATCC BAA-471 / A3(2) / M145).